A 249-amino-acid polypeptide reads, in one-letter code: Imidazole glycerol phosphate synthase subunit HisF (249 aa).

Catalysis depends on residues Asp11 and Asp130.

It belongs to the HisA/HisF family. In terms of assembly, heterodimer of HisH and HisF.

It localises to the cytoplasm. The enzyme catalyses 5-[(5-phospho-1-deoxy-D-ribulos-1-ylimino)methylamino]-1-(5-phospho-beta-D-ribosyl)imidazole-4-carboxamide + L-glutamine = D-erythro-1-(imidazol-4-yl)glycerol 3-phosphate + 5-amino-1-(5-phospho-beta-D-ribosyl)imidazole-4-carboxamide + L-glutamate + H(+). It functions in the pathway amino-acid biosynthesis; L-histidine biosynthesis; L-histidine from 5-phospho-alpha-D-ribose 1-diphosphate: step 5/9. Its function is as follows. IGPS catalyzes the conversion of PRFAR and glutamine to IGP, AICAR and glutamate. The HisF subunit catalyzes the cyclization activity that produces IGP and AICAR from PRFAR using the ammonia provided by the HisH subunit. The polypeptide is Imidazole glycerol phosphate synthase subunit HisF (Exiguobacterium sibiricum (strain DSM 17290 / CCUG 55495 / CIP 109462 / JCM 13490 / 255-15)).